We begin with the raw amino-acid sequence, 74 residues long: Antimicrobial peptide 36.4 (74 aa).

Residues 1–22 (MKVNVLLAVFLVVMVVTDHCHA) form the signal peptide. A Lysine amide modification is found at Lys-39. A propeptide spanning residues 44–74 (LQMEARFQPQNKNYRKRELDLENLFTHMPDY) is cleaved from the precursor.

Belongs to the non-disulfide-bridged peptide (NDBP) superfamily. Short antimicrobial peptide (group 4) family. As to expression, expressed by the venom gland.

It localises to the secreted. Its subcellular location is the target cell membrane. Cationic host defense peptide that have antibacterial activity by breaking membranes. Is more effective on Gram-positive than on Gram-negative bacteria. In Lychas mucronatus (Chinese swimming scorpion), this protein is Antimicrobial peptide 36.4.